Reading from the N-terminus, the 199-residue chain is Holliday junction branch migration complex subunit RuvA (199 aa).

The domain I stretch occupies residues 1-64 (MIGRISGLLL…EDGHFLYGFA (64 aa)). Residues 65-143 (TDEERTAFRQ…KALPQVAGAR (79 aa)) form a domain II region. The segment at 144 to 154 (LAAVAGGAPDA) is flexible linker. The segment at 154–199 (AKSDILNALLALGYNEKEALGAMKGLAEDTGVSDGIRQALKLLSKA) is domain III.

Belongs to the RuvA family. Homotetramer. Forms an RuvA(8)-RuvB(12)-Holliday junction (HJ) complex. HJ DNA is sandwiched between 2 RuvA tetramers; dsDNA enters through RuvA and exits via RuvB. An RuvB hexamer assembles on each DNA strand where it exits the tetramer. Each RuvB hexamer is contacted by two RuvA subunits (via domain III) on 2 adjacent RuvB subunits; this complex drives branch migration. In the full resolvosome a probable DNA-RuvA(4)-RuvB(12)-RuvC(2) complex forms which resolves the HJ.

It is found in the cytoplasm. Functionally, the RuvA-RuvB-RuvC complex processes Holliday junction (HJ) DNA during genetic recombination and DNA repair, while the RuvA-RuvB complex plays an important role in the rescue of blocked DNA replication forks via replication fork reversal (RFR). RuvA specifically binds to HJ cruciform DNA, conferring on it an open structure. The RuvB hexamer acts as an ATP-dependent pump, pulling dsDNA into and through the RuvAB complex. HJ branch migration allows RuvC to scan DNA until it finds its consensus sequence, where it cleaves and resolves the cruciform DNA. The polypeptide is Holliday junction branch migration complex subunit RuvA (Azoarcus sp. (strain BH72)).